Here is a 336-residue protein sequence, read N- to C-terminus: Aspartate--ammonia ligase (336 aa).

This sequence belongs to the class-II aminoacyl-tRNA synthetase family. AsnA subfamily.

Its subcellular location is the cytoplasm. The enzyme catalyses L-aspartate + NH4(+) + ATP = L-asparagine + AMP + diphosphate + H(+). The protein operates within amino-acid biosynthesis; L-asparagine biosynthesis; L-asparagine from L-aspartate (ammonia route): step 1/1. The protein is Aspartate--ammonia ligase of Clostridium perfringens (strain SM101 / Type A).